Consider the following 473-residue polypeptide: MSAKTLYEKLVESHTIRELDNEGHVLLYIDRSILNEYTSPQAFSGLRERGRTVRHPDTFLLNIDHVNPTRSQRDDLMTDPGGQLQVDYFRENAADFGITLFDVLDPRQGIEHVVAHEQGLVMPGMVIAAGDSHTTTYGAFGALGFGIGTSEIEHLLATQTLVYRKLKTMRVSVQGELPFACSAKDIVLELLERIGADGATGYAIEFVGEAISALSVEGRMTLCNMAVEAGARGAIIAPDKKVFDYIYGKPQMPVGELWQQALLEWSQLSSDADAVFDKTVAINCHDLEPKVTWGISPDQTGSITGRVPFPEQETNPLKRLALEKALHYMGLTAGMLLKDIRISHAFIGSCTNGRIEDLRAVAKVLEGRKIASHVRGIIVPGSTMVRRQAEEEGLAKIFIAAGFEWRQSGCSMCLAMNEDVLSPGDRCASGTNRNFPGRQGAGARTHLMSPAMVAAAAVAGHLVDVRSLLQAGE.

Residues Cys-350, Cys-410, and Cys-413 each contribute to the [4Fe-4S] cluster site.

The protein belongs to the aconitase/IPM isomerase family. LeuC type 1 subfamily. As to quaternary structure, heterodimer of LeuC and LeuD. The cofactor is [4Fe-4S] cluster.

The enzyme catalyses (2R,3S)-3-isopropylmalate = (2S)-2-isopropylmalate. Its pathway is amino-acid biosynthesis; L-leucine biosynthesis; L-leucine from 3-methyl-2-oxobutanoate: step 2/4. In terms of biological role, catalyzes the isomerization between 2-isopropylmalate and 3-isopropylmalate, via the formation of 2-isopropylmaleate. This Salmonella typhimurium (strain LT2 / SGSC1412 / ATCC 700720) protein is 3-isopropylmalate dehydratase large subunit 2.